Here is a 402-residue protein sequence, read N- to C-terminus: MHIKPIIQGVVARSAHPYGCEQAVLQQIQYVKQANPIKSGPKRVLILGASSGFGLAARIALTFGGAQADTIGVSFERAPSETQTGSAGYYNNLFFKQHAEQAGRIAVNLEGDVFSVDMREQVIEAIETYFEGEVDLIIYSIASGMRRKPRSEKADPEFWRSAIKPIGEAVSGATLLLENDTWIETTLQPASEEEIEGTLRVMGGDDWENWIDTLINAESLAEGCKTIAFSYMGPDVTHPIYLDGTLGRAKIDLHQTSHALNLKLANFDGGAYAVVCKALVTKASVFIPGLSPYLLALYQVMKNKGTHEGCIEQMQRLFSDKLYGHSRIPLDSERLIRMDDWEMNPDTQVQVRERLQQMNASNFQQLGDYAGFKREFMQLNGFEFDQIDYSQSVDMHNFINKK.

NAD(+) is bound by residues Gly48–Phe53, Phe75–Glu76, Asp112–Val113, and Ile141–Ala142. Residue Tyr231 participates in substrate binding. Residue Tyr241 is the Proton donor of the active site. NAD(+)-binding positions include Lys250 and Leu279–Thr281.

This sequence belongs to the TER reductase family. Monomer.

It carries out the reaction a 2,3-saturated acyl-[ACP] + NAD(+) = a (2E)-enoyl-[ACP] + NADH + H(+). Its pathway is lipid metabolism; fatty acid biosynthesis. Involved in the final reduction of the elongation cycle of fatty acid synthesis (FAS II). Catalyzes the reduction of a carbon-carbon double bond in an enoyl moiety that is covalently linked to an acyl carrier protein (ACP). The protein is Enoyl-[acyl-carrier-protein] reductase [NADH] of Vibrio cholerae serotype O1 (strain ATCC 39541 / Classical Ogawa 395 / O395).